The following is a 473-amino-acid chain: Aspartyl/glutamyl-tRNA(Asn/Gln) amidotransferase subunit B (473 aa).

The protein belongs to the GatB/GatE family. GatB subfamily. In terms of assembly, heterotrimer of A, B and C subunits.

The enzyme catalyses L-glutamyl-tRNA(Gln) + L-glutamine + ATP + H2O = L-glutaminyl-tRNA(Gln) + L-glutamate + ADP + phosphate + H(+). The catalysed reaction is L-aspartyl-tRNA(Asn) + L-glutamine + ATP + H2O = L-asparaginyl-tRNA(Asn) + L-glutamate + ADP + phosphate + 2 H(+). Allows the formation of correctly charged Asn-tRNA(Asn) or Gln-tRNA(Gln) through the transamidation of misacylated Asp-tRNA(Asn) or Glu-tRNA(Gln) in organisms which lack either or both of asparaginyl-tRNA or glutaminyl-tRNA synthetases. The reaction takes place in the presence of glutamine and ATP through an activated phospho-Asp-tRNA(Asn) or phospho-Glu-tRNA(Gln). The sequence is that of Aspartyl/glutamyl-tRNA(Asn/Gln) amidotransferase subunit B from Sulfurisphaera tokodaii (strain DSM 16993 / JCM 10545 / NBRC 100140 / 7) (Sulfolobus tokodaii).